Reading from the N-terminus, the 346-residue chain is Probable disease resistance protein At5g45440 (346 aa).

The 79-residue stretch at 38-116 folds into the NB-ARC domain; sequence KQVEDRVETD…AYAPRIWVSM (79 aa). Position 85 to 92 (85 to 92) interacts with ATP; the sequence is GEYGVGKT. Residues 315-346 are disordered; it reads FDDGKANQNGSKDGKTDSVDNPNSEESKTKPL.

Its function is as follows. Possible disease resistance protein. This chain is Probable disease resistance protein At5g45440, found in Arabidopsis thaliana (Mouse-ear cress).